The following is a 777-amino-acid chain: Glucocorticoid receptor (777 aa).

The span at 1-14 shows a compositional bias: basic and acidic residues; it reads MDSKESLTPGREEN. Residues 1–23 form a disordered region; it reads MDSKESLTPGREENPSSVLAQER. Residues 1–420 are modulating; that stretch reads MDSKESLTPG…TATTGPPPKL (420 aa). Residue threonine 8 is modified to Phosphothreonine. At arginine 23 the chain carries Omega-N-methylarginine. Phosphoserine occurs at positions 45, 113, 134, and 141. The segment covering 130–140 has biased composition (polar residues); that stretch reads NRSTSVPENPK. Positions 130–183 are disordered; that stretch reads NRSTSVPENPKSSASTAVSAAPTEKEFPKTHSDISSEQQHLKGQTGTNGGNVKL. Over residues 141–150 the composition is skewed to low complexity; it reads SSASTAVSAA. A compositionally biased stretch (basic and acidic residues) spans 152–163; that stretch reads TEKEFPKTHSDI. Polar residues predominate over residues 164–174; that stretch reads SSEQQHLKGQT. Serine 203, serine 211, and serine 226 each carry phosphoserine. Lysine 258 participates in a covalent cross-link: Glycyl lysine isopeptide (Lys-Gly) (interchain with G-Cter in SUMO2). At serine 267 the chain carries Phosphoserine. Glycyl lysine isopeptide (Lys-Gly) (interchain with G-Cter in SUMO); alternate cross-links involve residues lysine 277 and lysine 293. Residues lysine 277 and lysine 293 each participate in a glycyl lysine isopeptide (Lys-Gly) (interchain with G-Cter in SUMO2); alternate cross-link. Over residues 394-414 the composition is skewed to low complexity; that stretch reads SSPSMRPDVSSPPSSSSTATT. The segment at 394–415 is disordered; it reads SSPSMRPDVSSPPSSSSTATTG. Position 404 is a phosphoserine (serine 404). A Glycyl lysine isopeptide (Lys-Gly) (interchain with G-Cter in ubiquitin) cross-link involves residue lysine 419. 2 consecutive NR C4-type zinc fingers follow at residues 421–441 and 457–476; these read CLVC…CGSC and CAGR…CPAC. The segment at residues 421-486 is a DNA-binding region (nuclear receptor); the sequence is CLVCSDEASG…RYRKCLQAGM (66 aa). Residues lysine 480, lysine 492, lysine 494, and lysine 495 each carry the N6-acetyllysine modification. Residues 485–777 form an interaction with CLOCK region; it reads GMNLEARKTK…NIKKLLFHQK (293 aa). Positions 487 to 523 are hinge; sequence NLEARKTKKKIKGIQQATTGVSQETPENPANKTIVPA. One can recognise an NR LBD domain in the interval 524 to 758; the sequence is TLPQLTPTLV…FPEMLAEIIT (235 aa). Residues 532–697 are interaction with CRY1; it reads LVSLLEVIEP…EIRMTYIKEL (166 aa). Lysine 703 is covalently cross-linked (Glycyl lysine isopeptide (Lys-Gly) (interchain with G-Cter in SUMO)).

It belongs to the nuclear hormone receptor family. NR3 subfamily. In terms of assembly, heteromultimeric cytoplasmic complex with HSP90AA1, HSPA1A/HSPA1B, and FKBP5 or another immunophilin such as PPID, STIP1, or the immunophilin homolog PPP5C. Upon ligand binding FKBP5 dissociates from the complex and FKBP4 takes its place, thereby linking the complex to dynein and mediating transport to the nucleus, where the complex dissociates. Probably forms a complex composed of chaperones HSP90 and HSP70, co-chaperones CDC37, PPP5C, TSC1 and client protein TSC2, CDK4, AKT, RAF1 and NR3C1; this complex does not contain co-chaperones STIP1/HOP and PTGES3/p23. Directly interacts with UNC45A. Binds to DNA as a homodimer, and as heterodimer with NR3C2 or the retinoid X receptor. Binds STAT5A and STAT5B homodimers and heterodimers. Interacts with NRIP1, POU2F1, POU2F2 and TRIM28. Interacts with several coactivator complexes, including the SMARCA4 complex, CREBBP/EP300, TADA2L (Ada complex) and p160 coactivators such as NCOA2 and NCOA6. Interaction with BAG1 inhibits transactivation. Interacts with HEXIM1 and TGFB1I1. Interacts with NCOA1. Interacts with NCOA3, SMARCA4, SMARCC1, SMARCD1, and SMARCE1. Interacts with CLOCK, CRY1 and CRY2 in a ligand-dependent fashion. Interacts with CIART. Interacts with RWDD3. Interacts with UBE2I/UBC9 and this interaction is enhanced in the presence of RWDD3. Interacts with GRIP1. Interacts with NR4A3 (via nuclear receptor DNA-binding domain), represses transcription activity of NR4A3 on the POMC promoter Nur response element (NurRE). Directly interacts with PNRC2 to attract and form a complex with UPF1 and DCP1A; the interaction leads to rapid mRNA degradation. Interacts with GSK3B. Interacts with FNIP1 and FNIP2. Interacts (via C-terminus) with HNRNPU (via C-terminus). Interacts with MCM3AP. Interacts (via domain NR LBD) with HSP90AA1 and HSP90AB1. In the absence of hormonal ligand, interacts with TACC1. Interacts (via NR LBD domain) with ZNF764 (via KRAB domain); the interaction regulates transcription factor activity of NR3C1 by directing its actions toward certain biologic pathways. In terms of processing, acetylation by CLOCK reduces its binding to glucocorticoid response elements and its transcriptional activity. Increased proteasome-mediated degradation in response to glucocorticoids. Post-translationally, phosphorylated in the absence of hormone; becomes hyperphosphorylated in the presence of glucocorticoid. The Ser-203, Ser-226 and Ser-404-phosphorylated forms are mainly cytoplasmic, and the Ser-211-phosphorylated form is nuclear. Phosphorylation at Ser-211 increases transcriptional activity. Phosphorylation at Ser-203, Ser-226 and Ser-404 decreases signaling capacity. Phosphorylation at Ser-404 may protect from glucocorticoid-induced apoptosis. Phosphorylation at Ser-203 and Ser-211 is not required in regulation of chromosome segregation. May be dephosphorylated by PPP5C, attenuates NR3C1 action. In terms of processing, ubiquitinated by UBR5, leading to its degradation: UBR5 specifically recognizes and binds ligand-bound NR3C1 when it is not associated with coactivators (NCOAs). In presence of NCOAs, the UBR5-degron is not accessible, preventing its ubiquitination and degradation. Sumoylation at Lys-277 and Lys-293 negatively regulates its transcriptional activity. Sumoylation at Lys-703 positively regulates its transcriptional activity in the presence of RWDD3. Sumoylation at Lys-277 and Lys-293 is dispensable whereas sumoylation at Lys-703 is critical for the stimulatory effect of RWDD3 on its transcriptional activity. Heat shock increases sumoylation in a RWDD3-dependent manner.

It localises to the cytoplasm. Its subcellular location is the nucleus. It is found in the mitochondrion. The protein resides in the cytoskeleton. The protein localises to the spindle. It localises to the microtubule organizing center. Its subcellular location is the centrosome. It is found in the chromosome. The protein resides in the nucleoplasm. Functionally, receptor for glucocorticoids (GC). Has a dual mode of action: as a transcription factor that binds to glucocorticoid response elements (GRE), both for nuclear and mitochondrial DNA, and as a modulator of other transcription factors. Affects inflammatory responses, cellular proliferation and differentiation in target tissues. Involved in chromatin remodeling. Plays a role in rapid mRNA degradation by binding to the 5' UTR of target mRNAs and interacting with PNRC2 in a ligand-dependent manner which recruits the RNA helicase UPF1 and the mRNA-decapping enzyme DCP1A, leading to RNA decay. Could act as a coactivator for STAT5-dependent transcription upon growth hormone (GH) stimulation and could reveal an essential role of hepatic GR in the control of body growth. Mediates glucocorticoid-induced apoptosis. Promotes accurate chromosome segregation during mitosis. May act as a tumor suppressor. May play a negative role in adipogenesis through the regulation of lipolytic and antilipogenic gene expression. This chain is Glucocorticoid receptor (NR3C1), found in Pongo abelii (Sumatran orangutan).